The chain runs to 433 residues: Glutamyl-tRNA reductase (433 aa).

Substrate contacts are provided by residues Thr-49–Arg-52, Ser-114, Glu-119–Gln-121, and Gln-125. Cys-50 functions as the Nucleophile in the catalytic mechanism. Gly-201–Ile-206 provides a ligand contact to NADP(+).

The protein belongs to the glutamyl-tRNA reductase family. Homodimer.

It carries out the reaction (S)-4-amino-5-oxopentanoate + tRNA(Glu) + NADP(+) = L-glutamyl-tRNA(Glu) + NADPH + H(+). Its pathway is porphyrin-containing compound metabolism; protoporphyrin-IX biosynthesis; 5-aminolevulinate from L-glutamyl-tRNA(Glu): step 1/2. In terms of biological role, catalyzes the NADPH-dependent reduction of glutamyl-tRNA(Glu) to glutamate 1-semialdehyde (GSA). This chain is Glutamyl-tRNA reductase, found in Histophilus somni (strain 2336) (Haemophilus somnus).